The primary structure comprises 577 residues: Arginine--tRNA ligase (577 aa).

The 'HIGH' region motif lies at 122–132 (PNVAKEMHVGH).

This sequence belongs to the class-I aminoacyl-tRNA synthetase family. In terms of assembly, monomer.

The protein localises to the cytoplasm. It catalyses the reaction tRNA(Arg) + L-arginine + ATP = L-arginyl-tRNA(Arg) + AMP + diphosphate. The sequence is that of Arginine--tRNA ligase from Escherichia coli O6:K15:H31 (strain 536 / UPEC).